The following is a 314-amino-acid chain: Olfactory receptor 4Q2 (314 aa).

Residues 1 to 26 (MDKNQTEVMREFFLSGFSQTPSIEAG) are Extracellular-facing. N-linked (GlcNAc...) asparagine glycosylation occurs at asparagine 4. Residues 27–47 (LFVLFLFFYMSIWVGNVLIMV) form a helical membrane-spanning segment. The Cytoplasmic segment spans residues 48–61 (TVASDKYLNSSPMY). Residues 62–84 (FLLGNLSFLDLCYSTVTTPKLLA) form a helical membrane-spanning segment. Residues 85–98 (DFFNHEKLISYDQC) are Extracellular-facing. Cysteine 98 and cysteine 181 are joined by a disulfide. A helical membrane pass occupies residues 99–119 (IVQLFFLHFVGAAEMFLLTVM). The Cytoplasmic segment spans residues 120-142 (AYDRYVAICRPLHYTTVMSRGLC). Residues 143–163 (CVLVAASWMGGFVHSTVQTIL) traverse the membrane as a helical segment. Over 164–196 (TVHLPFCGPNQVENTFFCDVPPVIKLACADTFV) the chain is Extracellular. Residues 197–217 (IELLMVSNSGLISTISFVVLI) form a helical membrane-spanning segment. The Cytoplasmic portion of the chain corresponds to 218 to 236 (SSYTTILVKIRSKEGRRKA). A helical transmembrane segment spans residues 237–257 (LSTCASHLMVVTLFFGPCIFI). Over 258-268 (YARPFSTFSVD) the chain is Extracellular. The helical transmembrane segment at 269-289 (KMVSVLYNVITPMLNPLIYTL) threads the bilayer. Topologically, residues 290 to 314 (RNKEVKSAMQKLWVRNGLTWKKQET) are cytoplasmic.

Belongs to the G-protein coupled receptor 1 family.

The protein resides in the cell membrane. Its function is as follows. Odorant receptor. The polypeptide is Olfactory receptor 4Q2 (OR4Q2) (Homo sapiens (Human)).